The primary structure comprises 436 residues: Anaerobic glycerol-3-phosphate dehydrogenase subunit B (436 aa).

The protein belongs to the anaerobic G-3-P dehydrogenase subunit B family. Composed of a catalytic GlpA/B dimer and of membrane bound GlpC. Requires FMN as cofactor.

It catalyses the reaction a quinone + sn-glycerol 3-phosphate = dihydroxyacetone phosphate + a quinol. It participates in polyol metabolism; glycerol degradation via glycerol kinase pathway; glycerone phosphate from sn-glycerol 3-phosphate (anaerobic route): step 1/1. Functionally, conversion of glycerol 3-phosphate to dihydroxyacetone. Uses fumarate or nitrate as electron acceptor. The protein is Anaerobic glycerol-3-phosphate dehydrogenase subunit B of Vibrio cholerae serotype O1 (strain ATCC 39315 / El Tor Inaba N16961).